Here is a 141-residue protein sequence, read N- to C-terminus: Prefoldin subunit alpha (141 aa).

It belongs to the prefoldin subunit alpha family. In terms of assembly, heterohexamer of two alpha and four beta subunits.

It is found in the cytoplasm. Functionally, molecular chaperone capable of stabilizing a range of proteins. Seems to fulfill an ATP-independent, HSP70-like function in archaeal de novo protein folding. The polypeptide is Prefoldin subunit alpha (pfdA) (Methanothermobacter thermautotrophicus (strain ATCC 29096 / DSM 1053 / JCM 10044 / NBRC 100330 / Delta H) (Methanobacterium thermoautotrophicum)).